Reading from the N-terminus, the 205-residue chain is Phosphoenolpyruvate guanylyltransferase (205 aa).

Residues Thr138, Gly154, and Ser157 each contribute to the phosphoenolpyruvate site.

The protein belongs to the CofC family.

The catalysed reaction is phosphoenolpyruvate + GTP + H(+) = enolpyruvoyl-2-diphospho-5'-guanosine + diphosphate. It functions in the pathway cofactor biosynthesis; coenzyme F420 biosynthesis. Functionally, guanylyltransferase that catalyzes the activation of phosphoenolpyruvate (PEP) as enolpyruvoyl-2-diphospho-5'-guanosine, via the condensation of PEP with GTP. It is involved in the biosynthesis of coenzyme F420, a hydride carrier cofactor. This Chloroflexus aurantiacus (strain ATCC 29364 / DSM 637 / Y-400-fl) protein is Phosphoenolpyruvate guanylyltransferase.